The following is a 136-amino-acid chain: Histone H3.3C (136 aa).

The interval 1–44 is disordered; the sequence is MARTKQTARKSTGGKAPRKQLVTKAARKSAPSTGGMKKPHRYRP. Position 3 is an asymmetric dimethylarginine; by PRMT6; alternate (Arg-3). At Arg-3 the chain carries Citrulline; alternate. Thr-4 carries the post-translational modification Phosphothreonine; by HASPIN. At Lys-5 the chain carries Allysine; alternate. Lys-5 carries the post-translational modification N6,N6,N6-trimethyllysine; alternate. At Lys-5 the chain carries N6,N6-dimethyllysine; alternate. The residue at position 5 (Lys-5) is an N6-(2-hydroxyisobutyryl)lysine; alternate. The residue at position 5 (Lys-5) is an N6-(beta-hydroxybutyryl)lysine; alternate. The residue at position 5 (Lys-5) is an N6-acetyllysine; alternate. Lys-5 carries the N6-methyllysine; alternate modification. Gln-6 is subject to 5-glutamyl dopamine; alternate. Gln-6 carries the post-translational modification 5-glutamyl serotonin; alternate. Thr-7 is modified (phosphothreonine; by PKC). At Arg-9 the chain carries Symmetric dimethylarginine. Lys-10 is modified (N6,N6,N6-trimethyllysine; alternate). N6,N6-dimethyllysine; alternate is present on Lys-10. Lys-10 is modified (N6-(2-hydroxyisobutyryl)lysine; alternate). Lys-10 is modified (N6-(beta-hydroxybutyryl)lysine; alternate). N6-acetyllysine; alternate is present on Lys-10. Residue Lys-10 is modified to N6-methyllysine; alternate. Lys-10 is modified (N6-lactoyllysine; alternate). Ser-11 carries the post-translational modification ADP-ribosylserine; alternate. At Ser-11 the chain carries Phosphoserine; alternate; by AURKB, AURKC, RPS6KA3, RPS6KA4 and RPS6KA5. Thr-12 bears the Phosphothreonine; by PKC mark. At Lys-15 the chain carries N6-(2-hydroxyisobutyryl)lysine; alternate. Lys-15 is modified (N6-(beta-hydroxybutyryl)lysine; alternate). The residue at position 15 (Lys-15) is an N6-acetyllysine; alternate. Lys-15 carries the N6-lactoyllysine; alternate modification. Lys-15 carries the post-translational modification N6-glutaryllysine; alternate. Lys-15 carries the post-translational modification N6-succinyllysine; alternate. Position 18 is an asymmetric dimethylarginine (Arg-18). N6-(2-hydroxyisobutyryl)lysine; alternate is present on residues Lys-19 and Lys-24. An N6-(beta-hydroxybutyryl)lysine; alternate mark is found at Lys-19 and Lys-24. An N6-acetyllysine; alternate mark is found at Lys-19 and Lys-24. 2 positions are modified to N6-methyllysine; alternate: Lys-19 and Lys-24. Residues Lys-19 and Lys-24 each carry the N6-lactoyllysine; alternate modification. Lys-19 and Lys-24 each carry N6-glutaryllysine; alternate. Lys-19 and Lys-24 each carry N6-butyryllysine; alternate. The residue at position 27 (Arg-27) is a Citrulline. Lys-28 carries the N6,N6,N6-trimethyllysine; alternate modification. Lys-28 is modified (N6,N6-dimethyllysine; alternate). Lys-28 bears the N6-(2-hydroxyisobutyryl)lysine; alternate mark. Lys-28 is modified (N6-acetyllysine; alternate). Lys-28 is subject to N6-methyllysine; alternate. Lys-28 is subject to N6-lactoyllysine; alternate. Residue Lys-28 is modified to N6-glutaryllysine; alternate. Ser-29 bears the ADP-ribosylserine; alternate mark. Ser-29 is modified (phosphoserine; alternate; by AURKB, AURKC and RPS6KA5). Ser-32 carries the post-translational modification Phosphoserine. The residue at position 37 (Lys-37) is an N6,N6,N6-trimethyllysine; alternate. At Lys-37 the chain carries N6,N6-dimethyllysine; alternate. Lys-37 is subject to N6-(2-hydroxyisobutyryl)lysine; alternate. An N6-acetyllysine; alternate modification is found at Lys-37. An N6-methyllysine; alternate modification is found at Lys-37. Lys-38 bears the N6-methyllysine mark. The residue at position 42 (Tyr-42) is a Phosphotyrosine. The residue at position 57 (Lys-57) is an N6,N6,N6-trimethyllysine; alternate. Residue Lys-57 is modified to N6-(2-hydroxyisobutyryl)lysine; alternate. Position 57 is an N6-(beta-hydroxybutyryl)lysine; alternate (Lys-57). Lys-57 carries the post-translational modification N6-acetyllysine; alternate. Lys-57 is subject to N6-methyllysine; alternate. Lys-57 is modified (N6-lactoyllysine; alternate). At Lys-57 the chain carries N6-glutaryllysine; alternate. Lys-57 carries the post-translational modification N6-succinyllysine; alternate. A Phosphoserine modification is found at Ser-58. N6-(2-hydroxyisobutyryl)lysine; alternate is present on residues Lys-65 and Lys-80. An N6-methyllysine; alternate mark is found at Lys-65 and Lys-80. Residue Lys-80 is modified to N6,N6,N6-trimethyllysine; alternate. Position 80 is an N6,N6-dimethyllysine; alternate (Lys-80). Position 80 is an N6-acetyllysine; alternate (Lys-80). N6-lactoyllysine; alternate is present on Lys-80. Lys-80 carries the N6-glutaryllysine; alternate modification. N6-succinyllysine; alternate is present on Lys-80. Thr-81 is modified (phosphothreonine). The residue at position 87 (Ser-87) is a Phosphoserine. Residue Thr-108 is modified to Phosphothreonine. Residue Lys-116 is modified to N6-acetyllysine; alternate. Lys-116 is modified (N6-glutaryllysine; alternate).

This sequence belongs to the histone H3 family. As to quaternary structure, the nucleosome is a histone octamer containing two molecules each of H2A, H2B, H3 and H4 assembled in one H3-H4 heterotetramer and two H2A-H2B heterodimers. The octamer wraps approximately 147 bp of DNA. In terms of processing, acetylation is generally linked to gene activation. Acetylation on Lys-19 (H3K18ac) favors methylation at Arg-18 (H3R17me). Post-translationally, citrullination at Arg-18 by PADI4 impairs methylation and represses transcription. Asymmetric dimethylation at Arg-18 (H3R17me2a) by CARM1 is linked to gene activation. Asymmetric dimethylation at Arg-3 (H3R2me2a) by PRMT6 is linked to gene repression and is mutually exclusive with H3 Lys-5 methylation (H3K4me2 and H3K4me3). H3R2me2a is present at the 3' of genes regardless of their transcription state and is enriched on inactive promoters, while it is absent on active promoters. In terms of processing, methylation at Lys-5 (H3K4me) and Lys-80 (H3K79me) are linked to gene activation. Methylation at Lys-5 (H3K4me) facilitates subsequent acetylation of H3 and H4. Methylation at Lys-80 (H3K79me) is associated with DNA double-strand break (DSB) responses and is a specific target for TP53BP1. Methylation at Lys-10 (H3K9me) and Lys-28 (H3K27me) are linked to gene repression. Methylation at Lys-10 (H3K9me) is a specific target for HP1 proteins (CBX1, CBX3 and CBX5) and prevents subsequent phosphorylation at Ser-11 (H3S10ph) and acetylation of H3 and H4. Methylation at Lys-5 (H3K4me) and Lys-80 (H3K79me) require preliminary monoubiquitination of H2B at 'Lys-120'. Methylation at Lys-10 (H3K9me) and Lys-28 (H3K27me) are enriched in inactive X chromosome chromatin. Monomethylation at Lys-57 (H3K56me1) by EHMT2/G9A in G1 phase promotes interaction with PCNA and is required for DNA replication. Post-translationally, phosphorylated at Thr-4 (H3T3ph) by HASPIN during prophase and dephosphorylated during anaphase. Phosphorylation at Ser-11 (H3S10ph) by AURKB is crucial for chromosome condensation and cell-cycle progression during mitosis and meiosis. In addition phosphorylation at Ser-11 (H3S10ph) by RPS6KA4 and RPS6KA5 is important during interphase because it enables the transcription of genes following external stimulation, like mitogens, stress, growth factors or UV irradiation and result in the activation of genes, such as c-fos and c-jun. Phosphorylation at Ser-11 (H3S10ph), which is linked to gene activation, prevents methylation at Lys-10 (H3K9me) but facilitates acetylation of H3 and H4. Phosphorylation at Ser-11 (H3S10ph) by AURKB mediates the dissociation of HP1 proteins (CBX1, CBX3 and CBX5) from heterochromatin. Phosphorylation at Ser-11 (H3S10ph) is also an essential regulatory mechanism for neoplastic cell transformation. Phosphorylated at Ser-29 (H3S28ph) by MAP3K20 isoform 1, RPS6KA5 or AURKB during mitosis or upon ultraviolet B irradiation. Phosphorylation at Thr-7 (H3T6ph) by PRKCB is a specific tag for epigenetic transcriptional activation that prevents demethylation of Lys-5 (H3K4me) by LSD1/KDM1A. At centromeres, specifically phosphorylated at Thr-12 (H3T11ph) from prophase to early anaphase, by DAPK3 and PKN1. Phosphorylation at Thr-12 (H3T11ph) by PKN1 or isoform M2 of PKM (PKM2) is a specific tag for epigenetic transcriptional activation that promotes demethylation of Lys-10 (H3K9me) by KDM4C/JMJD2C. Phosphorylation at Tyr-42 (H3Y41ph) by JAK2 promotes exclusion of CBX5 (HP1 alpha) from chromatin. Lysine deamination at Lys-5 (H3K4all) to form allysine is mediated by LOXL2. Allysine formation by LOXL2 only takes place on H3K4me3 and results in gene repression. In terms of processing, butyrylation of histones marks active promoters and competes with histone acetylation. It is present during late spermatogenesis. Post-translationally, succinylation at Lys-80 (H3K79succ) by KAT2A takes place with a maximum frequency around the transcription start sites of genes. It gives a specific tag for epigenetic transcription activation. Serine ADP-ribosylation constitutes the primary form of ADP-ribosylation of proteins in response to DNA damage. Serine ADP-ribosylation at Ser-11 (H3S10ADPr) is mutually exclusive with phosphorylation at Ser-11 (H3S10ph) and impairs acetylation at Lys-10 (H3K9ac).

The protein resides in the nucleus. It is found in the chromosome. Its function is as follows. Core component of nucleosome. Nucleosomes wrap and compact DNA into chromatin, limiting DNA accessibility to the cellular machineries which require DNA as a template. Histones thereby play a central role in transcription regulation, DNA repair, DNA replication and chromosomal stability. DNA accessibility is regulated via a complex set of post-translational modifications of histones, also called histone code, and nucleosome remodeling. In Bos taurus (Bovine), this protein is Histone H3.3C.